Reading from the N-terminus, the 99-residue chain is MSRAILQVMIRGRVQGVGYRAWVEYQATASGLEGWVRNRRDGSVEALFAGAPNHVADMVALCRHGPPSSRVDSVTSETAGADELNLRRAGEKFSVLPTV.

The 93-residue stretch at Ile-5–Pro-97 folds into the Acylphosphatase-like domain. Catalysis depends on residues Arg-20 and Asn-38.

Belongs to the acylphosphatase family.

The enzyme catalyses an acyl phosphate + H2O = a carboxylate + phosphate + H(+). This chain is Acylphosphatase (acyP), found in Bradyrhizobium diazoefficiens (strain JCM 10833 / BCRC 13528 / IAM 13628 / NBRC 14792 / USDA 110).